Reading from the N-terminus, the 186-residue chain is Holliday junction branch migration complex subunit RuvA (186 aa).

Residues 1 to 61 (MYSYIKGKVV…ENLQILYGFN (61 aa)) are domain I. The tract at residues 62-134 (DNKNLLFFKK…LKGDLIFSEK (73 aa)) is domain II. Residues 134–135 (KI) form a flexible linker region. Positions 136–186 (ILNPKKTELEKILLNLGFVKKEIKSVLNQIDDKKELELMLKEVLLKLAKNI) are domain III.

This sequence belongs to the RuvA family. As to quaternary structure, homotetramer. Forms an RuvA(8)-RuvB(12)-Holliday junction (HJ) complex. HJ DNA is sandwiched between 2 RuvA tetramers; dsDNA enters through RuvA and exits via RuvB. An RuvB hexamer assembles on each DNA strand where it exits the tetramer. Each RuvB hexamer is contacted by two RuvA subunits (via domain III) on 2 adjacent RuvB subunits; this complex drives branch migration. In the full resolvosome a probable DNA-RuvA(4)-RuvB(12)-RuvC(2) complex forms which resolves the HJ.

The protein resides in the cytoplasm. In terms of biological role, the RuvA-RuvB-RuvC complex processes Holliday junction (HJ) DNA during genetic recombination and DNA repair, while the RuvA-RuvB complex plays an important role in the rescue of blocked DNA replication forks via replication fork reversal (RFR). RuvA specifically binds to HJ cruciform DNA, conferring on it an open structure. The RuvB hexamer acts as an ATP-dependent pump, pulling dsDNA into and through the RuvAB complex. HJ branch migration allows RuvC to scan DNA until it finds its consensus sequence, where it cleaves and resolves the cruciform DNA. In Phytoplasma mali (strain AT), this protein is Holliday junction branch migration complex subunit RuvA.